We begin with the raw amino-acid sequence, 64 residues long: Small ribosomal subunit protein bS21 (64 aa).

Belongs to the bacterial ribosomal protein bS21 family.

The sequence is that of Small ribosomal subunit protein bS21 from Pelagibacter ubique (strain HTCC1062).